Consider the following 267-residue polypeptide: MEVKIKQVDEVKISRYIIKETMEDWYQFVESDVVIVGAGPSGLSAAYYLAKAGLKTLVFERRLSFGGGIGGGAMLFHKLIIEKPADEILREVNVRLKEVEEGVYVVDSAEFMAKLATAAIDAGAKIIHGVTVDDVIFRENPLRVAGVAVEWTATQMASLHVDPIFISAKAVVDATGHDAEVISVAARKIPELGIVIPGEKSAYSERAEELTVINTGKVAEGLYAAGMAVTEVKGLPRMGPIFGAMVLSGKAVAEEITKDLLKSEIRT.

NAD(+) is bound by residues Ser41, 60–61 (ER), Gly68, Val132, and 160–162 (HVD). Residues Asp162 and His177 each contribute to the Fe cation site. Residue Met227 participates in NAD(+) binding. Arg237 serves as a coordination point for glycine.

This sequence belongs to the THI4 family. As to quaternary structure, homooctamer; tetramer of dimers. Fe(2+) is required as a cofactor.

The catalysed reaction is hydrogen sulfide + glycine + NAD(+) = ADP-5-ethyl-4-methylthiazole-2-carboxylate + nicotinamide + 3 H2O + H(+). It functions in the pathway cofactor biosynthesis; thiamine diphosphate biosynthesis. Functionally, involved in the biosynthesis of the thiazole moiety of thiamine. Catalyzes the conversion of NAD and glycine to adenosine diphosphate 5-(2-hydroxyethyl)-4-methylthiazole-2-carboxylate (ADT), an adenylated thiazole intermediate, using free sulfide as a source of sulfur. The polypeptide is Thiamine thiazole synthase (Saccharolobus islandicus (strain L.S.2.15 / Lassen #1) (Sulfolobus islandicus)).